The chain runs to 590 residues: Muscarinic acetylcholine receptor M3 (590 aa).

Residues 1-67 (MTLHNNNTTS…DPLGGHTIWQ (67 aa)) are Extracellular-facing. Residues Asn-6, Asn-7, Asn-15, Asn-41, Asn-48, and Asn-53 are each glycosylated (N-linked (GlcNAc...) asparagine). A helical transmembrane segment spans residues 68 to 91 (VVFIAFLTGVLALVTIIGNILVIV). The Cytoplasmic portion of the chain corresponds to 92–104 (AFKVNKQLKTVNN). The chain crosses the membrane as a helical span at residues 105–125 (YFLLSLACADLIIGVISMNLF). Residues 126-142 (TTYIIMNRWALGNLACD) are Extracellular-facing. Cys-141 and Cys-221 form a disulfide bridge. The chain crosses the membrane as a helical span at residues 143–164 (LWLSIDYVASNASVMNLLVISF). Residues 165 to 184 (DRYFSITRPLTYRAKRTTKR) lie on the Cytoplasmic side of the membrane. The helical transmembrane segment at 185–207 (AGVMIGLAWVISFILWAPAILFW) threads the bilayer. Residues 208–229 (QYFVGKRTVPPGECFIQFLSEP) lie on the Extracellular side of the membrane. A helical membrane pass occupies residues 230 to 252 (TITFGTAIAAFYMPVTIMTILYW). Residues 253 to 492 (RIYKETEKRT…LIKEKKAAQT (240 aa)) are Cytoplasmic-facing. A Basolateral sorting signal motif is present at residues 275-281 (AEAENFV). A disordered region spans residues 324-357 (AEQMDQDHSSSDSWNNNDAAASLENSASSDEEDI). Residues 334–345 (SDSWNNNDAAAS) are compositionally biased toward low complexity. Ser-385 carries the post-translational modification Phosphoserine. Residues 398 to 419 (SVGLERKPSKLQTQQSMDDGGS) are disordered. Positions 407–419 (KLQTQQSMDDGGS) are enriched in polar residues. The chain crosses the membrane as a helical span at residues 493–513 (LSAILLAFIITWTPYNIMVLV). The Extracellular segment spans residues 514-527 (NTFCDSCIPKTYWN). A helical membrane pass occupies residues 528–547 (LGYWLCYINSTVNPVCYALC). Residues 548 to 590 (NKTFRNTFKMLLLCQCDKRKRRKQQYQQRQSVIFHKRVPEQAL) lie on the Cytoplasmic side of the membrane.

It belongs to the G-protein coupled receptor 1 family. Muscarinic acetylcholine receptor subfamily. CHRM3 sub-subfamily. Homodimer; the dimers can form tetramers. Interacts with NALCN. Interacts with TMEM147.

It localises to the cell membrane. It is found in the postsynaptic cell membrane. The protein resides in the basolateral cell membrane. Its subcellular location is the endoplasmic reticulum membrane. In terms of biological role, the muscarinic acetylcholine receptor mediates various cellular responses, including inhibition of adenylate cyclase, breakdown of phosphoinositides and modulation of potassium channels through the action of G proteins. Primary transducing effect is Pi turnover. The protein is Muscarinic acetylcholine receptor M3 (CHRM3) of Bos taurus (Bovine).